A 336-amino-acid polypeptide reads, in one-letter code: Tryptophan--tRNA ligase (336 aa).

Residues 9 to 11 (QPS) and 17 to 18 (GN) contribute to the ATP site. The 'HIGH' region signature appears at 10–18 (PSGTPTIGN). Asp-134 lines the L-tryptophan pocket. ATP contacts are provided by residues 146–148 (GDD), Ile-189, and 198–202 (KMSKS). A 'KMSKS' region motif is present at residues 198-202 (KMSKS).

This sequence belongs to the class-I aminoacyl-tRNA synthetase family. Homodimer.

It localises to the cytoplasm. It catalyses the reaction tRNA(Trp) + L-tryptophan + ATP = L-tryptophyl-tRNA(Trp) + AMP + diphosphate + H(+). Catalyzes the attachment of tryptophan to tRNA(Trp). The sequence is that of Tryptophan--tRNA ligase from Enterococcus faecalis (strain ATCC 700802 / V583).